We begin with the raw amino-acid sequence, 243 residues long: DNA repair protein RecO (243 aa).

Belongs to the RecO family.

In terms of biological role, involved in DNA repair and RecF pathway recombination. The protein is DNA repair protein RecO of Phenylobacterium zucineum (strain HLK1).